Consider the following 270-residue polypeptide: Glutamate racemase (270 aa).

Residues 7–8 (DS) and 39–40 (YG) each bind substrate. Cysteine 70 serves as the catalytic Proton donor/acceptor. Residue 71–72 (NT) participates in substrate binding. The active-site Proton donor/acceptor is the cysteine 194. Residue 195–196 (TH) coordinates substrate.

It belongs to the aspartate/glutamate racemases family.

It carries out the reaction L-glutamate = D-glutamate. It functions in the pathway cell wall biogenesis; peptidoglycan biosynthesis. Its function is as follows. Provides the (R)-glutamate required for cell wall biosynthesis. The polypeptide is Glutamate racemase (Jannaschia sp. (strain CCS1)).